The sequence spans 654 residues: tRNA 5-methylaminomethyl-2-thiouridine biosynthesis bifunctional protein MnmC (654 aa).

The tract at residues 1 to 236 is tRNA (mnm(5)s(2)U34)-methyltransferase; that stretch reads MPTLLQHAQI…KWEVMSGAYV (236 aa). The FAD-dependent cmnm(5)s(2)U34 oxidoreductase stretch occupies residues 262–654; it reads IGAGLAGSSS…FGLRRLIRGK (393 aa).

This sequence in the N-terminal section; belongs to the methyltransferase superfamily. tRNA (mnm(5)s(2)U34)-methyltransferase family. In the C-terminal section; belongs to the DAO family. The cofactor is FAD.

The protein resides in the cytoplasm. It catalyses the reaction 5-aminomethyl-2-thiouridine(34) in tRNA + S-adenosyl-L-methionine = 5-methylaminomethyl-2-thiouridine(34) in tRNA + S-adenosyl-L-homocysteine + H(+). Its function is as follows. Catalyzes the last two steps in the biosynthesis of 5-methylaminomethyl-2-thiouridine (mnm(5)s(2)U) at the wobble position (U34) in tRNA. Catalyzes the FAD-dependent demodification of cmnm(5)s(2)U34 to nm(5)s(2)U34, followed by the transfer of a methyl group from S-adenosyl-L-methionine to nm(5)s(2)U34, to form mnm(5)s(2)U34. The sequence is that of tRNA 5-methylaminomethyl-2-thiouridine biosynthesis bifunctional protein MnmC from Pseudomonas putida (strain ATCC 700007 / DSM 6899 / JCM 31910 / BCRC 17059 / LMG 24140 / F1).